Reading from the N-terminus, the 481-residue chain is Cobyric acid synthase (481 aa).

The GATase cobBQ-type domain occupies 248–435 (ALTVAWLAFS…LHGMFGSDRF (188 aa)). Cysteine 330 functions as the Nucleophile in the catalytic mechanism. The active site involves histidine 427.

This sequence belongs to the CobB/CobQ family. CobQ subfamily.

It functions in the pathway cofactor biosynthesis; adenosylcobalamin biosynthesis. Functionally, catalyzes amidations at positions B, D, E, and G on adenosylcobyrinic A,C-diamide. NH(2) groups are provided by glutamine, and one molecule of ATP is hydrogenolyzed for each amidation. This chain is Cobyric acid synthase, found in Cereibacter sphaeroides (strain ATCC 17025 / ATH 2.4.3) (Rhodobacter sphaeroides).